A 643-amino-acid polypeptide reads, in one-letter code: Threonine--tRNA ligase (643 aa).

A TGS domain is found at 1-65 (MIHITLPDGS…NKDMPLSIVT (65 aa)). Residues 246 to 537 (DHRKLGRELD…LIEQHAGAMP (292 aa)) form a catalytic region. Residues C337, H388, and H514 each coordinate Zn(2+).

It belongs to the class-II aminoacyl-tRNA synthetase family. Homodimer. Requires Zn(2+) as cofactor.

Its subcellular location is the cytoplasm. It catalyses the reaction tRNA(Thr) + L-threonine + ATP = L-threonyl-tRNA(Thr) + AMP + diphosphate + H(+). In terms of biological role, catalyzes the attachment of threonine to tRNA(Thr) in a two-step reaction: L-threonine is first activated by ATP to form Thr-AMP and then transferred to the acceptor end of tRNA(Thr). Also edits incorrectly charged L-seryl-tRNA(Thr). This Delftia acidovorans (strain DSM 14801 / SPH-1) protein is Threonine--tRNA ligase.